The primary structure comprises 308 residues: Acetyl-coenzyme A carboxylase carboxyl transferase subunit beta (308 aa).

The 270-residue stretch at 26 to 295 (LWIKDPETGE…EQKPLEPEIL (270 aa)) folds into the CoA carboxyltransferase N-terminal domain.

It belongs to the AccD/PCCB family. As to quaternary structure, acetyl-CoA carboxylase is a heterohexamer composed of biotin carboxyl carrier protein (AccB), biotin carboxylase (AccC) and two subunits each of ACCase subunit alpha (AccA) and ACCase subunit beta (AccD).

Its subcellular location is the cytoplasm. It catalyses the reaction N(6)-carboxybiotinyl-L-lysyl-[protein] + acetyl-CoA = N(6)-biotinyl-L-lysyl-[protein] + malonyl-CoA. The protein operates within lipid metabolism; malonyl-CoA biosynthesis; malonyl-CoA from acetyl-CoA: step 1/1. Functionally, component of the acetyl coenzyme A carboxylase (ACC) complex. Biotin carboxylase (BC) catalyzes the carboxylation of biotin on its carrier protein (BCCP) and then the CO(2) group is transferred by the transcarboxylase to acetyl-CoA to form malonyl-CoA. The protein is Acetyl-coenzyme A carboxylase carboxyl transferase subunit beta of Mesorhizobium japonicum (strain LMG 29417 / CECT 9101 / MAFF 303099) (Mesorhizobium loti (strain MAFF 303099)).